Reading from the N-terminus, the 299-residue chain is Taste receptor type 2 member 50 (299 aa).

Position 1 (methionine 1) is a topological domain, extracellular. The helical transmembrane segment at 2-22 (ITFLYIFFSILIMVLFVLGNF) threads the bilayer. The Cytoplasmic portion of the chain corresponds to 23–55 (ANGFIALVNFIDWVKRKKISSADQILTALAVSR). Residues 56 to 76 (IGLLWTLLLNWYLTVLNPAFY) traverse the membrane as a helical segment. Residues 77–87 (SVELRITSYNA) are Extracellular-facing. The chain crosses the membrane as a helical span at residues 88–108 (WVVTNHFSMWLAASLSIFYLL). Residues 109–126 (KIANFSNLIFLHLKRRVR) are Cytoplasmic-facing. A helical transmembrane segment spans residues 127-147 (SVILVILLGTLIFLVCHLLVA). Over 148–181 (NMDESMWAEEYEGNITGKMKLRNTVHLSYLTVTT) the chain is Extracellular. Residue asparagine 161 is glycosylated (N-linked (GlcNAc...) asparagine). A helical membrane pass occupies residues 182–202 (LWSFIPFTLSLISFLMLICSL). At 203–229 (CKHLKKMQLHGEGSQDLSTKVHIKALQ) the chain is on the cytoplasmic side. The helical transmembrane segment at 230 to 250 (TLISFLLLCAIFFLFLIISVW) threads the bilayer. Residues 251–259 (SPRRLRNDP) are Extracellular-facing. Residues 260–280 (VVMVSKAVGNIYLAFDSFILI) form a helical membrane-spanning segment. Residues 281-299 (WRTKKLKHTFLLILCQIRC) are Cytoplasmic-facing.

This sequence belongs to the G-protein coupled receptor T2R family.

Its subcellular location is the membrane. Functionally, receptor that may play a role in the perception of bitterness and is gustducin-linked. May play a role in sensing the chemical composition of the gastrointestinal content. The activity of this receptor may stimulate alpha gustducin, mediate PLC-beta-2 activation and lead to the gating of TRPM5. This chain is Taste receptor type 2 member 50 (TAS2R50), found in Pan paniscus (Pygmy chimpanzee).